Reading from the N-terminus, the 199-residue chain is NADH-quinone oxidoreductase subunit C (199 aa).

It belongs to the complex I 30 kDa subunit family. In terms of assembly, NDH-1 is composed of 14 different subunits. Subunits NuoB, C, D, E, F, and G constitute the peripheral sector of the complex.

The protein localises to the cell inner membrane. The enzyme catalyses a quinone + NADH + 5 H(+)(in) = a quinol + NAD(+) + 4 H(+)(out). Its function is as follows. NDH-1 shuttles electrons from NADH, via FMN and iron-sulfur (Fe-S) centers, to quinones in the respiratory chain. The immediate electron acceptor for the enzyme in this species is believed to be ubiquinone. Couples the redox reaction to proton translocation (for every two electrons transferred, four hydrogen ions are translocated across the cytoplasmic membrane), and thus conserves the redox energy in a proton gradient. In Rhodopseudomonas palustris (strain BisB18), this protein is NADH-quinone oxidoreductase subunit C.